Reading from the N-terminus, the 259-residue chain is Phosphatidylglycerol--prolipoprotein diacylglyceryl transferase (259 aa).

Transmembrane regions (helical) follow at residues 9-29 (IIFYLGPLAISWYSLSYVVGI), 55-75 (FITYAVIGIIVGGRLGFVLLY), 92-112 (EGGMSFHGGALGVIIAAYLFC), and 117-137 (VNFLSLTDIIAAVVPIGLFLG). Arg-138 contributes to the a 1,2-diacyl-sn-glycero-3-phospho-(1'-sn-glycerol) binding site. 3 consecutive transmembrane segments (helical) span residues 172–192 (QLYEAFFEGLVLFCILAYATF), 201–221 (GLNSGLFLTFYALFRIAIEIF), and 228–248 (IGFILDNLTMGQILSVPMLIL).

This sequence belongs to the Lgt family.

It localises to the cell inner membrane. The enzyme catalyses L-cysteinyl-[prolipoprotein] + a 1,2-diacyl-sn-glycero-3-phospho-(1'-sn-glycerol) = an S-1,2-diacyl-sn-glyceryl-L-cysteinyl-[prolipoprotein] + sn-glycerol 1-phosphate + H(+). The protein operates within protein modification; lipoprotein biosynthesis (diacylglyceryl transfer). In terms of biological role, catalyzes the transfer of the diacylglyceryl group from phosphatidylglycerol to the sulfhydryl group of the N-terminal cysteine of a prolipoprotein, the first step in the formation of mature lipoproteins. This Rickettsia akari (strain Hartford) protein is Phosphatidylglycerol--prolipoprotein diacylglyceryl transferase.